A 268-amino-acid polypeptide reads, in one-letter code: Ribosomal RNA small subunit methyltransferase A (268 aa).

S-adenosyl-L-methionine-binding residues include Asn21, Leu23, Gly48, Glu69, Asp94, and Asn115.

The protein belongs to the class I-like SAM-binding methyltransferase superfamily. rRNA adenine N(6)-methyltransferase family. RsmA subfamily.

Its subcellular location is the cytoplasm. The enzyme catalyses adenosine(1518)/adenosine(1519) in 16S rRNA + 4 S-adenosyl-L-methionine = N(6)-dimethyladenosine(1518)/N(6)-dimethyladenosine(1519) in 16S rRNA + 4 S-adenosyl-L-homocysteine + 4 H(+). Functionally, specifically dimethylates two adjacent adenosines (A1518 and A1519) in the loop of a conserved hairpin near the 3'-end of 16S rRNA in the 30S particle. May play a critical role in biogenesis of 30S subunits. The polypeptide is Ribosomal RNA small subunit methyltransferase A (Saccharophagus degradans (strain 2-40 / ATCC 43961 / DSM 17024)).